The primary structure comprises 454 residues: UDP-N-acetylmuramate--L-alanine ligase (454 aa).

109–115 is a binding site for ATP; it reads GTHGKTT.

The protein belongs to the MurCDEF family.

The protein localises to the cytoplasm. The catalysed reaction is UDP-N-acetyl-alpha-D-muramate + L-alanine + ATP = UDP-N-acetyl-alpha-D-muramoyl-L-alanine + ADP + phosphate + H(+). It participates in cell wall biogenesis; peptidoglycan biosynthesis. In terms of biological role, cell wall formation. This chain is UDP-N-acetylmuramate--L-alanine ligase, found in Protochlamydia amoebophila (strain UWE25).